Here is a 173-residue protein sequence, read N- to C-terminus: Alpha-crystallin A chain (173 aa).

Residue Met1 is modified to N-acetylmethionine. Residues 1–63 (MDIAIQHPWF…RSVLDSGISE (63 aa)) form a required for complex formation with BFSP1 and BFSP2 region. Gln6 carries the post-translational modification Deamidated glutamine; partial. Ser45 is modified (phosphoserine). Deamidated glutamine; partial is present on Gln50. In terms of domain architecture, sHSP spans 52-162 (VFRSVLDSGI…GHSERAIPVS (111 aa)). 2 positions are modified to N6-acetyllysine: Lys70 and Lys99. His100 lines the Zn(2+) pocket. Asn101 bears the Deamidated asparagine; partial mark. Positions 102 and 107 each coordinate Zn(2+). The residue at position 122 (Ser122) is a Phosphoserine. Deamidated asparagine; partial is present on Asn123. The tract at residues 144-173 (PKVPSGVDAGHSERAIPVSREEKPSSAPSS) is disordered. Over residues 153-167 (GHSERAIPVSREEKP) the composition is skewed to basic and acidic residues. His154 provides a ligand contact to Zn(2+). Residue Ser162 is glycosylated (O-linked (GlcNAc) serine).

Belongs to the small heat shock protein (HSP20) family. Heteromer composed of three CRYAA and one CRYAB subunits. Inter-subunit bridging via zinc ions enhances stability, which is crucial as there is no protein turn over in the lens. Can also form homodimers and homotetramers (dimers of dimers) which serve as the building blocks of homooligomers. Within homooligomers, the zinc-binding motif is created from residues of 3 different molecules. His-100 and Glu-102 from one molecule are ligands of the zinc ion, and His-107 and His-154 residues from additional molecules complete the site with tetrahedral coordination geometry. Part of a complex required for lens intermediate filament formation composed of BFSP1, BFSP2 and CRYAA. Post-translationally, acetylation at Lys-70 may increase chaperone activity. Undergoes age-dependent proteolytical cleavage at the C-terminus.

It is found in the cytoplasm. The protein resides in the nucleus. Functionally, contributes to the transparency and refractive index of the lens. Acts as a chaperone, preventing aggregation of various proteins under a wide range of stress conditions. Required for the correct formation of lens intermediate filaments as part of a complex composed of BFSP1, BFSP2 and CRYAA. In Halichoerus grypus (Gray seal), this protein is Alpha-crystallin A chain (CRYAA).